The primary structure comprises 670 residues: Acetolactate synthase, chloroplastic (670 aa).

Low complexity-rich tracts occupy residues 1 to 48 and 55 to 77; these read MAAA…SSSS and KSSS…TTPS. A chloroplast-targeting transit peptide spans 1-55; that stretch reads MAAATTTTTTSSSISFSTKPSPSSSKSPLPISRFSLPFSLNPNKSSSSSRRRGIK. Positions 1-94 are disordered; it reads MAAATTTTTT…ETFISRFAPD (94 aa). Glutamate 144 lines the thiamine diphosphate pocket. Position 186 (serine 186) interacts with FAD. Glutamine 207 provides a ligand contact to thiamine diphosphate. Residues lysine 220 and arginine 246 each coordinate (R)-imazaquin. Residue arginine 246 coordinates FAD. Residue lysine 256 coordinates chlorimuron-ethyl. FAD-binding positions include glycine 308 and 331-332; that span reads TL. Cysteine 340 is subject to Cysteine sulfinic acid (-SO2H). Residues 349 to 352 and 371 to 375 each bind FAD; these read LGMH and GVRFD. Chlorimuron-ethyl is bound at residue 376 to 377; that stretch reads DR. FAD contacts are provided by residues 395-396 and 414-415; these read DI and DV. The stretch at 414–446 forms a coiled coil; that stretch reads DVKLALQGMNKVLENRAEELKLDFGVWRNELNV. Position 487–488 (487–488) interacts with thiamine diphosphate; the sequence is QH. 508–509 lines the FAD pocket; the sequence is GG. Thiamine diphosphate contacts are provided by residues 511 to 513, 538 to 540, and 565 to 570; these read GAM, DGS, and NQHLGM. Mg(2+)-binding residues include aspartate 538, asparagine 565, and histidine 567. 2 residues coordinate chlorimuron-ethyl: tryptophan 574 and serine 653.

This sequence belongs to the TPP enzyme family. As to quaternary structure, homodimer or homotetramer. The acetolactate synthase complex contains both large catalytic subunits and small regulatory subunits. Homodimer. The acetolactate synthase complex contains 4 homodimers of the large catalytic subunits, and 1 homotetramer of the small regulatory subunits. Mg(2+) is required as a cofactor. Requires FAD as cofactor. Thiamine diphosphate serves as cofactor.

It localises to the plastid. The protein localises to the chloroplast. It catalyses the reaction 2 pyruvate + H(+) = (2S)-2-acetolactate + CO2. It functions in the pathway amino-acid biosynthesis; L-isoleucine biosynthesis; L-isoleucine from 2-oxobutanoate: step 1/4. The protein operates within amino-acid biosynthesis; L-valine biosynthesis; L-valine from pyruvate: step 1/4. Inhibited by asymmetric aryl disulfides, triazolopyrimidine sulfonanilide compounds, isatin derivatives, and sulfonylurea and imidazolinone herbicides. Insensitive to feed-back inhibition by branched-chain amino acids. Functionally, catalyzes the formation of acetolactate from pyruvate, the first step in valine and isoleucine biosynthesis. This Arabidopsis thaliana (Mouse-ear cress) protein is Acetolactate synthase, chloroplastic (ALS).